We begin with the raw amino-acid sequence, 397 residues long: Myb family transcription factor PHL4 (397 aa).

Residues Met1–Asn27 form a disordered region. An HTH myb-type domain is found at Ala228 to Tyr288. Positions Pro259 to Arg284 form a DNA-binding region, H-T-H motif. A coiled coil region spans residues Thr319–Leu339. Positions Leu332–Glu337 match the LHEQLE motif. The segment at Lys359–Glu397 is disordered. The segment covering Glu386–Glu397 has biased composition (basic and acidic residues). Ser387 bears the Phosphoserine mark.

Belongs to the MYB-CC family.

The protein localises to the nucleus. Transcription factor involved in male gametophyte development. The polypeptide is Myb family transcription factor PHL4 (Arabidopsis thaliana (Mouse-ear cress)).